Reading from the N-terminus, the 318-residue chain is Protoheme IX farnesyltransferase (318 aa).

A run of 9 helical transmembrane segments spans residues 33 to 53 (VMSL…VSVH), 54 to 74 (PFIG…SGAL), 102 to 122 (GEAL…LALA), 125 to 145 (VLAG…YTMW), 154 to 174 (IVIG…AATG), 181 to 201 (WLMF…LALF), 225 to 245 (VHIL…AFSN), 246 to 266 (IGGP…LLGA), and 288 to 308 (FFKL…AEAL).

It belongs to the UbiA prenyltransferase family. Protoheme IX farnesyltransferase subfamily. In terms of assembly, interacts with CtaA.

It is found in the cell inner membrane. It catalyses the reaction heme b + (2E,6E)-farnesyl diphosphate + H2O = Fe(II)-heme o + diphosphate. The protein operates within porphyrin-containing compound metabolism; heme O biosynthesis; heme O from protoheme: step 1/1. In terms of biological role, converts heme B (protoheme IX) to heme O by substitution of the vinyl group on carbon 2 of heme B porphyrin ring with a hydroxyethyl farnesyl side group. This chain is Protoheme IX farnesyltransferase, found in Ruegeria pomeroyi (strain ATCC 700808 / DSM 15171 / DSS-3) (Silicibacter pomeroyi).